The sequence spans 408 residues: 3-phosphoshikimate 1-carboxyvinyltransferase (408 aa).

3 residues coordinate 3-phosphoshikimate: lysine 20, serine 21, and arginine 25. Lysine 20 contributes to the phosphoenolpyruvate binding site. Phosphoenolpyruvate is bound at residue arginine 111. 3-phosphoshikimate-binding residues include serine 151, serine 152, glutamine 153, serine 178, aspartate 293, and lysine 320. Glutamine 153 serves as a coordination point for phosphoenolpyruvate. Aspartate 293 (proton acceptor) is an active-site residue. Residues arginine 324, arginine 365, and lysine 389 each contribute to the phosphoenolpyruvate site.

The protein belongs to the EPSP synthase family. Monomer.

Its subcellular location is the cytoplasm. The enzyme catalyses 3-phosphoshikimate + phosphoenolpyruvate = 5-O-(1-carboxyvinyl)-3-phosphoshikimate + phosphate. It participates in metabolic intermediate biosynthesis; chorismate biosynthesis. Catalyzes the transfer of the enolpyruvyl moiety of phosphoenolpyruvate (PEP) to the 5-hydroxyl of shikimate-3-phosphate (S3P) to produce enolpyruvyl shikimate-3-phosphate and inorganic phosphate. This chain is 3-phosphoshikimate 1-carboxyvinyltransferase, found in Sulfurisphaera tokodaii (strain DSM 16993 / JCM 10545 / NBRC 100140 / 7) (Sulfolobus tokodaii).